The following is a 492-amino-acid chain: MTLWINGDWITGQGERRRKTNPVSAEILWQGNDANAAQVAEACQVARAAFPRWARQPFAARQAIVEKFAALLEAHKAELTEVIARETGKPRWEAATEVTAMINKIAISIKAYHARTGEQKSELVDGAATLRHRPHGVLAVFGPYNFPGHLPNGHIVPALLAGNTLIFKPSELTPWTGETVIKLWERAGLPAGVLNLVQGGRETGQALSSLDDLDGLLFTGSASTGYQLHRQLSGQPEKILALEMGGNNPLIIEDVANTDAAVHLTLQSAFITAGQRCTCARRLLVKQGAQGDAFLARLVDVAGRLQPGRWDDDPQPFIGGLISAQAAQHVMEAWRQREALGGRTLLAPRKVKEGTSLLTPGIIELTGVADVPDEEVFGPLLNVWRYAHFDEAIRLANNTRFGLSCGLVSTDRAQFEQLLLEARAGIVNWNKPLTGAASTAPFGGIGASGNHRPSAWYAADYCAWPMASLESPELTLPATLSPGLDFSLREAV.

An NAD(+)-binding site is contributed by glycine 220–glycine 225. Active-site residues include glutamate 243 and cysteine 277.

Belongs to the aldehyde dehydrogenase family. AstD subfamily.

The enzyme catalyses N-succinyl-L-glutamate 5-semialdehyde + NAD(+) + H2O = N-succinyl-L-glutamate + NADH + 2 H(+). It participates in amino-acid degradation; L-arginine degradation via AST pathway; L-glutamate and succinate from L-arginine: step 4/5. Catalyzes the NAD-dependent reduction of succinylglutamate semialdehyde into succinylglutamate. This chain is N-succinylglutamate 5-semialdehyde dehydrogenase, found in Salmonella gallinarum (strain 287/91 / NCTC 13346).